Here is a 76-residue protein sequence, read N- to C-terminus: UPF0248 protein PAE2518 (76 aa).

This sequence belongs to the UPF0248 family.

The polypeptide is UPF0248 protein PAE2518 (Pyrobaculum aerophilum (strain ATCC 51768 / DSM 7523 / JCM 9630 / CIP 104966 / NBRC 100827 / IM2)).